The chain runs to 575 residues: uncharacterized protein (575 aa).

It is found in the cytoplasm. The protein resides in the cytoskeleton. Its subcellular location is the microtubule organizing center. The protein localises to the spindle pole body. This is an uncharacterized protein from Schizosaccharomyces pombe (strain 972 / ATCC 24843) (Fission yeast).